The following is a 306-amino-acid chain: UDP-3-O-acyl-N-acetylglucosamine deacetylase (306 aa).

Zn(2+) is bound by residues His79, His238, and Asp242. Catalysis depends on His265, which acts as the Proton donor.

The protein belongs to the LpxC family. It depends on Zn(2+) as a cofactor.

The enzyme catalyses a UDP-3-O-[(3R)-3-hydroxyacyl]-N-acetyl-alpha-D-glucosamine + H2O = a UDP-3-O-[(3R)-3-hydroxyacyl]-alpha-D-glucosamine + acetate. Its pathway is glycolipid biosynthesis; lipid IV(A) biosynthesis; lipid IV(A) from (3R)-3-hydroxytetradecanoyl-[acyl-carrier-protein] and UDP-N-acetyl-alpha-D-glucosamine: step 2/6. Its function is as follows. Catalyzes the hydrolysis of UDP-3-O-myristoyl-N-acetylglucosamine to form UDP-3-O-myristoylglucosamine and acetate, the committed step in lipid A biosynthesis. The polypeptide is UDP-3-O-acyl-N-acetylglucosamine deacetylase (Shewanella frigidimarina (strain NCIMB 400)).